The sequence spans 258 residues: Acyl-[acyl-carrier-protein]--UDP-N-acetylglucosamine O-acyltransferase (258 aa).

Belongs to the transferase hexapeptide repeat family. LpxA subfamily. As to quaternary structure, homotrimer.

It is found in the cytoplasm. The catalysed reaction is a (3R)-hydroxyacyl-[ACP] + UDP-N-acetyl-alpha-D-glucosamine = a UDP-3-O-[(3R)-3-hydroxyacyl]-N-acetyl-alpha-D-glucosamine + holo-[ACP]. It participates in glycolipid biosynthesis; lipid IV(A) biosynthesis; lipid IV(A) from (3R)-3-hydroxytetradecanoyl-[acyl-carrier-protein] and UDP-N-acetyl-alpha-D-glucosamine: step 1/6. Involved in the biosynthesis of lipid A, a phosphorylated glycolipid that anchors the lipopolysaccharide to the outer membrane of the cell. The polypeptide is Acyl-[acyl-carrier-protein]--UDP-N-acetylglucosamine O-acyltransferase (Azotobacter vinelandii (strain DJ / ATCC BAA-1303)).